Consider the following 300-residue polypeptide: Phosphoenolpyruvate phosphomutase (300 aa).

Positions 1-10 (MLANSLKSFF) are excised as a propeptide. Aspartate 66 serves as the catalytic Nucleophile.

Belongs to the isocitrate lyase/PEP mutase superfamily. PEP mutase family.

It catalyses the reaction phosphoenolpyruvate + H(+) = 3-phosphonopyruvate. The protein operates within phosphorus metabolism; phosphonate biosynthesis. In terms of biological role, formation of a carbon-phosphorus bond by converting phosphoenolpyruvate (PEP) to phosphonopyruvate (P-Pyr). This is Phosphoenolpyruvate phosphomutase (PEPM) from Tetrahymena pyriformis.